A 58-amino-acid chain; its full sequence is Conotoxin Im5.4 (58 aa).

Residues 1–18 (MRCLPVVVFLLLLLSAAA) form the signal peptide. Positions 19–28 (APGVGSKTER) are excised as a propeptide.

It belongs to the conotoxin T superfamily. Contains 2 disulfide bonds that can be either 'C1-C3, C2-C4' or 'C1-C4, C2-C3', since these disulfide connectivities have been observed for conotoxins with cysteine framework V (for examples, see AC P0DQQ7 and AC P81755). As to expression, expressed by the venom duct.

Its subcellular location is the secreted. Probable neurotoxin. The protein is Conotoxin Im5.4 of Conus imperialis (Imperial cone).